The sequence spans 563 residues: Arginine--tRNA ligase (563 aa).

Positions 120 to 130 (PNIAKPFHVGH) match the 'HIGH' region motif.

This sequence belongs to the class-I aminoacyl-tRNA synthetase family. As to quaternary structure, monomer.

It is found in the cytoplasm. The catalysed reaction is tRNA(Arg) + L-arginine + ATP = L-arginyl-tRNA(Arg) + AMP + diphosphate. The polypeptide is Arginine--tRNA ligase (Clostridium beijerinckii (strain ATCC 51743 / NCIMB 8052) (Clostridium acetobutylicum)).